The following is a 1379-amino-acid chain: ATPase histone chaperone YTA7 (1379 aa).

2 disordered regions span residues 1–39 and 54–243; these read MARNLRNRRGSDVEDASNAKVGYETQIKDENGIIHTTTR and DFLE…NSRN. Position 2 is an N-acetylalanine (A2). Residues S11 and S17 each carry the phosphoserine modification. The segment covering 61–78 has biased composition (basic and acidic residues); the sequence is VMDKDETPVDVTSDEHHN. Phosphoserine is present on S94. Residues 97–110 show a composition bias toward basic and acidic residues; that stretch reads ENARTNEELTNERN. 2 stretches are compositionally biased toward acidic residues: residues 119-152 and 170-184; these read PEEDDESFHEEDVDDDEEEEEADEFEDEYLDEDS and DPDDDEEYDEDDEEG. Over residues 192–207 the composition is skewed to basic residues; that stretch reads SSKRLKRANSRRTRSS. At T212 the chain carries Phosphothreonine. Residues 218-228 show a composition bias toward basic residues; it reads RALRSRTRHSR. T229 bears the Phosphothreonine mark. Phosphoserine occurs at positions 241, 259, and 285. Residues 302-330 are disordered; it reads NPSPARRGRGGWNASQNSGPTRRLFPTGG. Phosphoserine occurs at positions 367, 369, and 370. The interval 375 to 396 is disordered; it reads LPLGVTPKTKKENTQKKKKKKP. Residues 450-578 form an AAA-ATPase; required for its chromatin boundary function region; the sequence is VLFHGPPGTG…PALRRPGRFD (129 aa). 454–461 is an ATP binding site; sequence GPPGTGKT. Residue S735 is modified to Phosphoserine. Positions 974–1101 constitute a Bromo domain; the sequence is RLKNVLKIKL…ANAQMGIEEI (128 aa). A Phosphoserine modification is found at S1142. Disordered stretches follow at residues 1233–1274 and 1291–1316; these read TCTS…ANTN and LHETVEKRERSPIPKEVVEPEQGKKS. Positions 1244–1254 are enriched in basic and acidic residues; the sequence is ERARKEPKENE. The residue at position 1256 (S1256) is a Phosphoserine. A compositionally biased stretch (polar residues) spans 1256–1274; that stretch reads SLQTQVTEENFSKIDANTN. Over residues 1293–1316 the composition is skewed to basic and acidic residues; the sequence is ETVEKRERSPIPKEVVEPEQGKKS.

It belongs to the AAA ATPase family. As to quaternary structure, interacts with CSE4/CENP-A. Interacts with SCM3. Interacts with SPT16. Interacts with POB3. Interacts with the casein kinase II complex subunits CKA1, CKA2, CKB1 and CKB2. Interacts with RNA polymerase II. Interacts (via Bromo domain) with histone H3. Interacts (via Bromo domain) with histone H4. Post-translationally, phosphorylated by CDK1 and casein kinase II during S-phase, which leads to its eviction from histone gene promoters and promotes histone gene transcription.

Its subcellular location is the chromosome. The protein resides in the centromere. It is found in the nucleus. Its function is as follows. Functions as an ATP-dependent nucleosome disassembly factor that helps evict canonical histone H3 from the 5'-end of genes upon their induction. Also contributes to kinetochore assembly by cooperating with SCM3 to load the histone H3 variant CSE4/CENP-A at centromeres. Provides a chromatin boundary function at the 5'-end of genes that restricts access by RTT106 and thus prevents ectopic spreading of repressive chromatin into coding regions. Also prevents heterochromatin spreading downstream of the silent mating-type locus HMR, this function is independent of the tRNA boundary element. Contributes to appropriate cell cycle regulation of histone gene expression by recruiting RNA polymerase II to histone genes, and subsequent CDK1- and casein kinase II-dependent eviction from chromatin is required to promote transcriptional elongation. This chain is ATPase histone chaperone YTA7, found in Saccharomyces cerevisiae (strain ATCC 204508 / S288c) (Baker's yeast).